The sequence spans 1150 residues: Cell division cycle and apoptosis regulator protein 1 (1150 aa).

The interval 1-249 (MAQFGGQKNP…TQPQPQSLLQ (249 aa)) is interaction with AR. Disordered regions lie at residues 124–146 (PTAQITVSYPTPRSSQQQTQPQK) and 285–354 (IVSQ…SPRR). A compositionally biased stretch (low complexity) spans 134-146 (TPRSSQQQTQPQK). The interaction with GATA2 stretch occupies residues 203–660 (QRIQTLPNQN…RALSSKGLKS (458 aa)). Basic and acidic residues-rich tracts occupy residues 293–334 (RRLD…ERSP) and 341–352 (ERSPRRERERSP). Residue Ser456 is modified to Phosphoserine. Positions 594–618 (KQQLVEKLQGERKEADGEQDEEEKD) form a coiled coil. Residues 600-638 (KLQGERKEADGEQDEEEKDDGEAKEISTPTHWSKLDPKT) form a disordered region. A compositionally biased stretch (acidic residues) spans 610-621 (GEQDEEEKDDGE). The residue at position 627 (Thr627) is a Phosphothreonine. The region spanning 636–670 (PKTMKVNDLRKELESRALSSKGLKSQLIARLTKQL) is the SAP domain. Lys637 participates in a covalent cross-link: Glycyl lysine isopeptide (Lys-Gly) (interchain with G-Cter in ubiquitin). Residues 643-1150 (DLRKELESRA…QKSKENGASV (508 aa)) form an interaction with GATA1 region. Thr667 bears the Phosphothreonine mark. Basic and acidic residues-rich tracts occupy residues 673 to 687 (EEQKEEQKELEKSEK), 694 to 713 (DRKSEDDKEEEERKRQEEIE), 796 to 817 (KEDKKEKDKKSKKDERKDKKEE), and 832 to 855 (SGDDKDKKEDRDERKKEDKRKDDS). Disordered regions lie at residues 673–713 (EEQK…EEIE) and 796–915 (KEDK…EKEK). 2 positions are modified to phosphoserine: Ser685 and Ser697. Residues 856–889 (KDDDETEEDNNQDEYDPMEAEEAEDEEDDRDEEE) show a composition bias toward acidic residues. Thr861 carries the phosphothreonine modification. A compositionally biased stretch (basic and acidic residues) spans 890 to 915 (MTKRDDKRDINRYCKERPSKDKEKEK). A Glycyl lysine isopeptide (Lys-Gly) (interchain with G-Cter in SUMO1); alternate cross-link involves residue Lys1012. Lys1012 is covalently cross-linked (Glycyl lysine isopeptide (Lys-Gly) (interchain with G-Cter in SUMO2); alternate). Residues 1033–1114 (DVGSLLQKLE…LQFENQMNKT (82 aa)) are a coiled coil. Residues Lys1067 and Lys1135 each participate in a glycyl lysine isopeptide (Lys-Gly) (interchain with G-Cter in SUMO2) cross-link.

Directly interacts with ESR1, NR3C1 and p53/TP53. Interacts (via N-terminus) with CALCOCO1. Interacts with MED1. Interacts with GATA1. Interacts with AR and GATA2. Expressed in various epithelial cancer cell lines, including breast, colon, prostate, pancreatic and leukemia. Expression is regulated by growth factors.

It is found in the cytoplasm. It localises to the perinuclear region. In terms of biological role, associates with components of the Mediator and p160 coactivator complexes that play a role as intermediaries transducing regulatory signals from upstream transcriptional activator proteins to basal transcription machinery at the core promoter. Recruited to endogenous nuclear receptor target genes in response to the appropriate hormone. Also functions as a p53 coactivator. May thus play an important role in transcriptional regulation. May be involved in apoptosis signaling in the presence of the reinoid CD437. Apoptosis induction involves sequestration of 14-3-3 protein(s) and mediated altered expression of multiple cell cycle regulatory genes including MYC, CCNB1 and CDKN1A. Plays a role in cell cycle progression and/or cell proliferation. In association with CALCOCO1 enhances GATA1- and MED1-mediated transcriptional activation from the gamma-globin promoter during erythroid differentiation of K562 erythroleukemia cells. Can act as a both a coactivator and corepressor of AR-mediated transcription. Contributes to chromatin looping and AR transcription complex assembly by stabilizing AR-GATA2 association on chromatin and facilitating MED1 and RNA polymerase II recruitment to AR-binding sites. May play an important role in the growth and tumorigenesis of prostate cancer cells. This chain is Cell division cycle and apoptosis regulator protein 1 (CCAR1), found in Homo sapiens (Human).